A 299-amino-acid polypeptide reads, in one-letter code: MKTKQWPSKTERHKRFGSVPPVAGKKPIHKEEMADLQNMPNDFLFALDSVGIHNVKHPCIIQSNLKPYEQTTVGTFSLTTGLEQMSKGINMSRLTELLQEYHQTGFILSLKNMQAFTKDLAERMEQSSAHVHVTFPWFFERESPSLNKIGLAHAEARLNVHFDETLGFTHEVGLTAAVTTLCPCSKEISEYSAHNQRGYVTIKATFYEPTEGSDDWKVTLLEAAESNASSILYPVLKRPDEKAVTEKAYENPRFVEDMVRLTAADLYENETIKAFTVECRNEESIHQHDAIATLSYSKK.

The interval 1-25 (MKTKQWPSKTERHKRFGSVPPVAGK) is disordered.

Belongs to the GTP cyclohydrolase IV family.

It carries out the reaction GTP + H2O = 7,8-dihydroneopterin 3'-triphosphate + formate + H(+). It functions in the pathway cofactor biosynthesis; 7,8-dihydroneopterin triphosphate biosynthesis; 7,8-dihydroneopterin triphosphate from GTP: step 1/1. Its function is as follows. Converts GTP to 7,8-dihydroneopterin triphosphate. The chain is GTP cyclohydrolase FolE2 from Halalkalibacterium halodurans (strain ATCC BAA-125 / DSM 18197 / FERM 7344 / JCM 9153 / C-125) (Bacillus halodurans).